The following is a 132-amino-acid chain: Small ribosomal subunit protein uS8 (132 aa).

The protein belongs to the universal ribosomal protein uS8 family. Part of the 30S ribosomal subunit. Contacts proteins S5 and S12.

One of the primary rRNA binding proteins, it binds directly to 16S rRNA central domain where it helps coordinate assembly of the platform of the 30S subunit. The polypeptide is Small ribosomal subunit protein uS8 (Geobacillus thermodenitrificans (strain NG80-2)).